Here is a 90-residue protein sequence, read N- to C-terminus: Putative membrane protein insertion efficiency factor (90 aa).

It belongs to the UPF0161 family.

It localises to the cell inner membrane. In terms of biological role, could be involved in insertion of integral membrane proteins into the membrane. This chain is Putative membrane protein insertion efficiency factor, found in Thermosynechococcus vestitus (strain NIES-2133 / IAM M-273 / BP-1).